The primary structure comprises 129 residues: Small ribosomal subunit protein uS11c (129 aa).

It belongs to the universal ribosomal protein uS11 family. Part of the 30S ribosomal subunit.

The protein localises to the plastid. Its subcellular location is the chloroplast. In Gracilaria tenuistipitata var. liui (Red alga), this protein is Small ribosomal subunit protein uS11c.